The primary structure comprises 270 residues: MAVITKIEVQKRSKERFNIYIDKGQGEEYGFSVDQVILMKHGLQKGLEIDEIELGNILYNEEVQKAYLQAISYLSYQMRTKQEIEDFLRKKEVGQAIISEVVSKLLHDRYINDKEYAVLYTRTQSNVNRKGPTVIKRELLNKGVQDLIIMHSLQEYPKEKQIENALFLIEKKKKSYQKHSFLQMKLKLDEMLVRKGYSREVIQICLEELKDERDDEKQQEALHYHGNKYYEKYKKYDGWTFENKMKQALYRKGFSIDEIEIFLQMKREEG.

Belongs to the RecX family.

The protein resides in the cytoplasm. In terms of biological role, modulates RecA activity. This Bacillus cereus (strain G9842) protein is Regulatory protein RecX.